We begin with the raw amino-acid sequence, 336 residues long: DNA-directed RNA polymerase subunit alpha (336 aa).

The segment at methionine 1–aspartate 232 is alpha N-terminal domain (alpha-NTD). The segment at phenylalanine 248–tyrosine 336 is alpha C-terminal domain (alpha-CTD).

The protein belongs to the RNA polymerase alpha chain family. Homodimer. The RNAP catalytic core consists of 2 alpha, 1 beta, 1 beta' and 1 omega subunit. When a sigma factor is associated with the core the holoenzyme is formed, which can initiate transcription.

The catalysed reaction is RNA(n) + a ribonucleoside 5'-triphosphate = RNA(n+1) + diphosphate. Functionally, DNA-dependent RNA polymerase catalyzes the transcription of DNA into RNA using the four ribonucleoside triphosphates as substrates. The sequence is that of DNA-directed RNA polymerase subunit alpha from Rhizobium rhizogenes (strain K84 / ATCC BAA-868) (Agrobacterium radiobacter).